Here is a 720-residue protein sequence, read N- to C-terminus: MGKTKSRGRRAEKKNKKNEPGFNEDVSNLDSDVTITNQEPLSSSMSSTSGIPNTFFGLVDNNELDYFKQAESTLNINAFETDEERQGFINSVLEEAQGKELKLVTNQICSKLMERLILFANHNQLKKIFKQFQNHFVSLAFHKYASHVLETLLVRSAALIEKELTQTDEEKLEEAEEEEAEEEEAEEDSLNNDVPMEDLFISMLNEFKPHLTTMIDHSYASHVLRLLILILAGKELPSSVTSNSTLRSKKSKIARKMIEIKDNEDFDRAFQTPQSFKNELREYCQTIIVGLDTKSARELSIHKIGSPVLQLLIQVEGLVDRERSFWHLIFAKDSEGKDSVEESFVEYLLSESVGSHFLESIIKNDGARPKYIERLYKLYMKDRVLKLAKRSTTGVYIIQALLFKLKPVEVEYILDQIIPELAELISIAENQNLDLANKLIDASISRGNYRRDEIINQLFIKFAPNYDIENPSDNTSTEFIENILQLTGSTLGNTRDDWPTAEERKRALFLEKLMEYDYKFVICTWFNFMALPIERFVQMCFHGVFCHVVEKALIVEPEEPKPIQILRKRLLNIFQGQIVGLACNSYGSHIVDSLWNFTVLLPMYKDRIASELLGDSNKVKESTYGRLVWKNWGMELFVRKKYDWKALIKQQEQEYYGETEDSTEKRAKKPIELKMERLAEEKRRQEEMAERAQSGYTKRKLEEATGTASEKKQKLRGRRR.

The span at Met1 to Lys16 shows a compositional bias: basic residues. Positions Met1–Ser31 are disordered. Pumilio repeat units follow at residues Glu95–Lys130 and Gln131–Gln166. Residues Thr165–Leu190 form a disordered region. A compositionally biased stretch (acidic residues) spans Glu170–Leu190. 6 Pumilio repeats span residues Glu206 to Ser242, Gly290 to Ala331, Ser339 to Lys377, Tyr379 to Asp415, Ala530 to Arg567, and Asn572 to Ser610. A disordered region spans residues Glu658–Arg720. Positions Ser662 to Glu690 are enriched in basic and acidic residues.

This sequence belongs to the NOP9 family.

Its subcellular location is the nucleus. The protein localises to the nucleolus. Functionally, RNA-binding nucleolar protein required for pre-rRNA processing. Involved in production of 18S rRNA and assembly of small ribosomal subunit. This chain is Nucleolar protein 9 (NOP9), found in Candida albicans (strain SC5314 / ATCC MYA-2876) (Yeast).